The following is a 329-amino-acid chain: GTPase Obg (329 aa).

Positions 1 to 159 (MQFIDQARIT…WPLQLELKLL (159 aa)) constitute an Obg domain. An OBG-type G domain is found at 160–328 (AEVGIIGLPN…LLAETWVELG (169 aa)). Residues 166–173 (GLPNAGKS), 191–195 (FTTLV), 213–216 (DIPG), 280–283 (NKQE), and 309–311 (SAA) each bind ATP. 2 residues coordinate Mg(2+): Ser173 and Thr193.

This sequence belongs to the TRAFAC class OBG-HflX-like GTPase superfamily. OBG GTPase family. As to quaternary structure, monomer. It depends on Mg(2+) as a cofactor.

The protein localises to the cytoplasm. Functionally, an essential GTPase which binds GTP, GDP and possibly (p)ppGpp with moderate affinity, with high nucleotide exchange rates and a fairly low GTP hydrolysis rate. Plays a role in control of the cell cycle, stress response, ribosome biogenesis and in those bacteria that undergo differentiation, in morphogenesis control. The sequence is that of GTPase Obg from Synechococcus sp. (strain CC9605).